A 287-amino-acid polypeptide reads, in one-letter code: Inorganic pyrophosphatase (287 aa).

Arginine 80 lines the diphosphate pocket. Positions 117, 122, and 154 each coordinate Mg(2+).

It belongs to the PPase family. It depends on Mg(2+) as a cofactor.

The protein resides in the cytoplasm. The catalysed reaction is diphosphate + H2O = 2 phosphate + H(+). This chain is Inorganic pyrophosphatase (IPP1), found in Yarrowia lipolytica (strain CLIB 122 / E 150) (Yeast).